The following is a 475-amino-acid chain: Probable sensor histidine kinase TcrY (475 aa).

At 1–153 (MGITAATEMA…NVDATMLQML (153 aa)) the chain is on the extracellular side. A helical transmembrane segment spans residues 154–174 (IIFGIVTVIALVAATTAGIVI). Residues 175 to 475 (IKRALAPLRR…GWQPLESSPR (301 aa)) lie on the Cytoplasmic side of the membrane. Residues 176 to 238 (KRALAPLRRV…MLDHIAAALS (63 aa)) enclose the HAMP domain. The 214-residue stretch at 253–466 (DASHELRTPL…EFAVRLPLDG (214 aa)) folds into the Histidine kinase domain. His256 is subject to Phosphohistidine; by autocatalysis.

In terms of assembly, homodimer. The cofactor is a divalent metal cation. Post-translationally, autophosphorylated.

Its subcellular location is the cell membrane. The catalysed reaction is ATP + protein L-histidine = ADP + protein N-phospho-L-histidine.. Functionally, member of the two-component regulatory system TcrY/TcrX. Activates TcrX by phosphorylation. This is Probable sensor histidine kinase TcrY (tcrY) from Mycobacterium tuberculosis (strain ATCC 25618 / H37Rv).